We begin with the raw amino-acid sequence, 222 residues long: MAAPSEVAAAVLGEGDGGAFGSWLDGRLEALGVDRAVYAAYILGVLQEEEEEEKLDALQGILSAFLEEESLLDICKEIVERWSETRDVTTKVKKEDEVQAIATLIEKQAQIVVKPRVVSEEEKQRKAALLAQYADVTDEEDEADKKDDAGASTANVSSDRTLFRNTNVEDVLNARKLERDSLRDESQRKKEQDKLQREKDKLAKQERKEKEKKRTQKGERKR.

Lysine 93 is covalently cross-linked (Glycyl lysine isopeptide (Lys-Gly) (interchain with G-Cter in SUMO1)). Positions 119–143 (SEEEKQRKAALLAQYADVTDEEDEA) form a coiled coil. The tract at residues 136-222 (VTDEEDEADK…KRTQKGERKR (87 aa)) is disordered. Position 137 is a phosphothreonine (threonine 137). Polar residues predominate over residues 152-168 (STANVSSDRTLFRNTNV). The segment covering 172 to 209 (LNARKLERDSLRDESQRKKEQDKLQREKDKLAKQERKE) has biased composition (basic and acidic residues). The stretch at 175–217 (RKLERDSLRDESQRKKEQDKLQREKDKLAKQERKEKEKKRTQK) forms a coiled coil. Over residues 210-222 (KEKKRTQKGERKR) the composition is skewed to basic residues.

The protein belongs to the CCDC43 family.

In Mus musculus (Mouse), this protein is Coiled-coil domain-containing protein 43 (Ccdc43).